A 297-amino-acid polypeptide reads, in one-letter code: Vacuolar protein sorting-associated protein 26C (297 aa).

Belongs to the VPS26 family. Component of the commander complex that is essential for endosomal recycling of transmembrane cargos; the commander complex is composed of the CCC subcomplex and the retriever subcomplex. Component of the heterotrimeric retriever complex consisting of VPS26C, VPS29 and VPS35L; within the complex interacts with VPS35L. Interacts with SNX17 (via C-terminus); the interaction is direct and associates SNX17 with the retriever complex. Interacts with SNX31; the interaction is direct.

The protein resides in the endosome. Component of the commander complex that is essential for endosomal recycling of transmembrane cargos; the commander complex is composed of the CCC subcomplex and the retriever subcomplex. Component of the retriever complex, which is a heterotrimeric complex related to retromer cargo-selective complex (CSC) and essential for retromer-independent retrieval and recycling of numerous cargos such as integrin alpha-5/beta-1 (ITGA5:ITGB1). The recruitment of the retriever complex to the endosomal membrane involves CCC and WASH complexes. In the endosomes, drives the retriever and recycling of NxxY-motif-containing cargo proteins by coupling to SNX17, a cargo essential for the homeostatic maintenance of numerous cell surface proteins associated with processes that include cell migration, cell adhesion, nutrient supply and cell signaling. The chain is Vacuolar protein sorting-associated protein 26C from Mus musculus (Mouse).